We begin with the raw amino-acid sequence, 175 residues long: Nucleoside-triphosphatase THEP1 (175 aa).

ATP-binding positions include glycine 8–serine 15 and leucine 99–glycine 106.

The protein belongs to the THEP1 NTPase family.

It carries out the reaction a ribonucleoside 5'-triphosphate + H2O = a ribonucleoside 5'-diphosphate + phosphate + H(+). In terms of biological role, has nucleotide phosphatase activity towards ATP, GTP, CTP, TTP and UTP. May hydrolyze nucleoside diphosphates with lower efficiency. This chain is Nucleoside-triphosphatase THEP1, found in Methanosarcina acetivorans (strain ATCC 35395 / DSM 2834 / JCM 12185 / C2A).